The following is a 606-amino-acid chain: Serine/threonine-protein kinase A-Raf (606 aa).

Residues 19–91 enclose the RBD domain; it reads GTVKVYLPNK…DGEELIVEVL (73 aa). The Phorbol-ester/DAG-type zinc-finger motif lies at 98-144; it reads MHNFVRKTFFSLAFCDFCLKFLFHGFRCQTCGYKFHQHCSSKVPTVC. The Zn(2+) site is built by His-99, Cys-112, Cys-115, Cys-125, Cys-128, His-133, Cys-136, and Cys-144. Phosphoserine is present on residues Ser-157 and Ser-162. The tract at residues 160-207 is disordered; that stretch reads DLSGGSRQHEAPSNRPLNELLTPQGPSPRTQHCDPEHFPFPAPANAPL. Position 181 is a phosphothreonine (Thr-181). Phosphoserine occurs at positions 186 and 214. The tract at residues 240–290 is disordered; sequence STDAAGSRGGSDGTPRGSPSPASVSSGRKSPHSKSPAEQRERKSLADDKKK. Thr-253 is modified (phosphothreonine). 2 positions are modified to phosphoserine: Ser-257 and Ser-269. Residues 274–289 are compositionally biased toward basic and acidic residues; it reads SPAEQRERKSLADDKK. In terms of domain architecture, Protein kinase spans 310-570; that stretch reads VQLLKRIGTG…PQILATIELL (261 aa). Residues 316–324 and Lys-336 each bind ATP; that span reads IGTGSFGTV. Thr-318 carries the post-translational modification Phosphothreonine. Asp-429 acts as the Proton acceptor in catalysis.

This sequence belongs to the protein kinase superfamily. TKL Ser/Thr protein kinase family. RAF subfamily. In terms of assembly, interacts with TH1L/NELFD. It depends on Zn(2+) as a cofactor. Post-translationally, dephosphorylation of Ser-214 by the SHOC2-MRAS-PP1c (SMP) complex consisting of SHOC2, GTP-bound M-Ras/MRAS and the catalytic subunit of protein phosphatase 1 (PPP1CA, PPP1CB or PPP1CC); this relieves inactivation and stimulates kinase activity. In terms of tissue distribution, predominantly in urogenital tissues.

It carries out the reaction L-seryl-[protein] + ATP = O-phospho-L-seryl-[protein] + ADP + H(+). The catalysed reaction is L-threonyl-[protein] + ATP = O-phospho-L-threonyl-[protein] + ADP + H(+). Its function is as follows. Involved in the transduction of mitogenic signals from the cell membrane to the nucleus. May also regulate the TOR signaling cascade. Phosphorylates PFKFB2. Functionally, serves as a positive regulator of myogenic differentiation by inducing cell cycle arrest, the expression of myogenin and other muscle-specific proteins, and myotube formation. This chain is Serine/threonine-protein kinase A-Raf (ARAF), found in Homo sapiens (Human).